We begin with the raw amino-acid sequence, 489 residues long: uncharacterized protein (489 aa).

4 disordered regions span residues 1 to 94, 109 to 229, 300 to 389, and 428 to 461; these read MIEE…GSLD, NRNQ…SDDD, DDNI…TSIQ, and SESG…TLVK. Low complexity-rich tracts occupy residues 43-53 and 64-77; these read LLVQQSNQSVK and SNGF…NIHD. Over residues 121 to 138 the composition is skewed to acidic residues; that stretch reads NFSEDDEDDDAEDDDSSD. Residues 144–154 are compositionally biased toward basic residues; the sequence is KKNKPKKPSKL. Over residues 155 to 164 the composition is skewed to basic and acidic residues; sequence MKHDSVDGKN. Residues 173–199 show a composition bias toward basic residues; sequence SKKKVQHQLKEKNKKKGIKNDKKKSKP. Acidic residues predominate over residues 308-343; sequence NDNDNDNDDDNDNDNDNDNDNDNDNDDDENGEDNGE. 2 stretches are compositionally biased toward low complexity: residues 344 to 389 and 433 to 449; these read DLNI…TSIQ and SISS…SSKS.

This is an uncharacterized protein from Dictyostelium discoideum (Social amoeba).